A 191-amino-acid chain; its full sequence is Peptidyl-tRNA hydrolase (191 aa).

Tyrosine 14 serves as a coordination point for tRNA. The active-site Proton acceptor is the histidine 19. Residues phenylalanine 64, asparagine 66, and asparagine 112 each contribute to the tRNA site.

This sequence belongs to the PTH family. As to quaternary structure, monomer.

The protein resides in the cytoplasm. It carries out the reaction an N-acyl-L-alpha-aminoacyl-tRNA + H2O = an N-acyl-L-amino acid + a tRNA + H(+). Its function is as follows. Hydrolyzes ribosome-free peptidyl-tRNAs (with 1 or more amino acids incorporated), which drop off the ribosome during protein synthesis, or as a result of ribosome stalling. Functionally, catalyzes the release of premature peptidyl moieties from peptidyl-tRNA molecules trapped in stalled 50S ribosomal subunits, and thus maintains levels of free tRNAs and 50S ribosomes. The sequence is that of Peptidyl-tRNA hydrolase from Novosphingobium aromaticivorans (strain ATCC 700278 / DSM 12444 / CCUG 56034 / CIP 105152 / NBRC 16084 / F199).